We begin with the raw amino-acid sequence, 640 residues long: Threonine--tRNA ligase (640 aa).

Residues 1-60 (MKITFPDGAVKEFEPGVSTADIAASISPGLKKKALAGKLNGELLDLVTPIHEDGAIEIVT) enclose the TGS domain. A catalytic region spans residues 241 to 538 (DHRKLGKELE…LIEEYKGAFP (298 aa)). 3 residues coordinate Zn(2+): Cys-334, His-385, and His-515.

This sequence belongs to the class-II aminoacyl-tRNA synthetase family. In terms of assembly, homodimer. It depends on Zn(2+) as a cofactor.

It is found in the cytoplasm. The enzyme catalyses tRNA(Thr) + L-threonine + ATP = L-threonyl-tRNA(Thr) + AMP + diphosphate + H(+). Its function is as follows. Catalyzes the attachment of threonine to tRNA(Thr) in a two-step reaction: L-threonine is first activated by ATP to form Thr-AMP and then transferred to the acceptor end of tRNA(Thr). Also edits incorrectly charged L-seryl-tRNA(Thr). This chain is Threonine--tRNA ligase, found in Listeria monocytogenes serovar 1/2a (strain ATCC BAA-679 / EGD-e).